Reading from the N-terminus, the 146-residue chain is Hemoglobin subunit beta (146 aa).

N-acetylvaline is present on Val-1. Residues 2–146 (HLTDAEKAAI…VASALAHKYH (145 aa)) enclose the Globin domain. His-63 contributes to the heme b binding site. Lys-82 carries the N6-acetyllysine modification. Residue His-92 coordinates heme b. An S-nitrosocysteine modification is found at Cys-93. At Lys-144 the chain carries N6-acetyllysine.

Belongs to the globin family. In terms of assembly, heterotetramer of two alpha chains and two beta chains. As to expression, red blood cells.

Involved in oxygen transport from the lung to the various peripheral tissues. This Microtus xanthognathus (Yellow-cheeked vole) protein is Hemoglobin subunit beta (HBB).